The following is a 162-amino-acid chain: Caveolin-2 (162 aa).

Residues 1 to 86 are Cytoplasmic-facing; it reads MGLETEKADV…FEISKYVMYK (86 aa). A Phosphotyrosine modification is found at Tyr19. Phosphoserine is present on residues Ser20 and Ser36. Residues 87–107 constitute an intramembrane region (helical); that stretch reads FLTVFLAIPLAFVAGILFATL. The Cytoplasmic segment spans residues 108-162; it reads SCLHIWIIMPFVKTCLMVLPSVQTIWKSVTDVIIAPLCTSVGRSFSSISLQLSHD.

It belongs to the caveolin family. As to quaternary structure, homodimer. Caveolin-1 and -2 colocalize and form a stable hetero-oligomeric complex.

It is found in the golgi apparatus membrane. Its subcellular location is the cell membrane. The protein localises to the membrane. It localises to the caveola. Its function is as follows. May act as a scaffolding protein within caveolar membranes. Interacts directly with G-protein alpha subunits and can functionally regulate their activity. Caveolin-2 may function as an accessory protein in conjunction with caveolin-1. The protein is Caveolin-2 (CAV2) of Microcebus murinus (Gray mouse lemur).